A 348-amino-acid polypeptide reads, in one-letter code: Protein RecA (348 aa).

64–71 (GPESSGKT) contacts ATP. Over residues 326–335 (EIDGTNKEPL) the composition is skewed to basic and acidic residues. A disordered region spans residues 326-348 (EIDGTNKEPLDENEETLSLLDDE). Over residues 336-348 (DENEETLSLLDDE) the composition is skewed to acidic residues.

This sequence belongs to the RecA family.

It is found in the cytoplasm. Functionally, can catalyze the hydrolysis of ATP in the presence of single-stranded DNA, the ATP-dependent uptake of single-stranded DNA by duplex DNA, and the ATP-dependent hybridization of homologous single-stranded DNAs. It interacts with LexA causing its activation and leading to its autocatalytic cleavage. In Listeria innocua serovar 6a (strain ATCC BAA-680 / CLIP 11262), this protein is Protein RecA.